The sequence spans 106 residues: Urease subunit beta (106 aa).

It belongs to the urease beta subunit family. As to quaternary structure, heterotrimer of UreA (gamma), UreB (beta) and UreC (alpha) subunits. Three heterotrimers associate to form the active enzyme.

It is found in the cytoplasm. It catalyses the reaction urea + 2 H2O + H(+) = hydrogencarbonate + 2 NH4(+). The protein operates within nitrogen metabolism; urea degradation; CO(2) and NH(3) from urea (urease route): step 1/1. In Klebsiella pneumoniae (strain 342), this protein is Urease subunit beta.